The primary structure comprises 310 residues: Ribosomal RNA small subunit methyltransferase H (310 aa).

S-adenosyl-L-methionine-binding positions include 33–35 (AGH), Asp-53, Tyr-83, Asp-100, and Gln-107.

The protein belongs to the methyltransferase superfamily. RsmH family.

It is found in the cytoplasm. It catalyses the reaction cytidine(1402) in 16S rRNA + S-adenosyl-L-methionine = N(4)-methylcytidine(1402) in 16S rRNA + S-adenosyl-L-homocysteine + H(+). In terms of biological role, specifically methylates the N4 position of cytidine in position 1402 (C1402) of 16S rRNA. This Clostridium perfringens (strain ATCC 13124 / DSM 756 / JCM 1290 / NCIMB 6125 / NCTC 8237 / Type A) protein is Ribosomal RNA small subunit methyltransferase H.